A 436-amino-acid chain; its full sequence is Putative F-box/FBD/LRR-repeat protein At5g44960 (436 aa).

Positions C4–F50 constitute an F-box domain. LRR repeat units follow at residues I287 to G310 and S397 to K420. Residues E355–F407 enclose the FBD domain.

The chain is Putative F-box/FBD/LRR-repeat protein At5g44960 from Arabidopsis thaliana (Mouse-ear cress).